We begin with the raw amino-acid sequence, 224 residues long: Phosphoribosylformylglycinamidine synthase subunit PurQ (224 aa).

Positions 2–224 (TVAIIRFGGS…DGQGVLEGFR (223 aa)) constitute a Glutamine amidotransferase type-1 domain. Cys85 serves as the catalytic Nucleophile. Catalysis depends on residues His202 and Glu204. The disordered stretch occupies residues 204–224 (ERASLPDIGPTDGQGVLEGFR).

As to quaternary structure, part of the FGAM synthase complex composed of 1 PurL, 1 PurQ and 2 PurS subunits.

It localises to the cytoplasm. The enzyme catalyses N(2)-formyl-N(1)-(5-phospho-beta-D-ribosyl)glycinamide + L-glutamine + ATP + H2O = 2-formamido-N(1)-(5-O-phospho-beta-D-ribosyl)acetamidine + L-glutamate + ADP + phosphate + H(+). The catalysed reaction is L-glutamine + H2O = L-glutamate + NH4(+). It participates in purine metabolism; IMP biosynthesis via de novo pathway; 5-amino-1-(5-phospho-D-ribosyl)imidazole from N(2)-formyl-N(1)-(5-phospho-D-ribosyl)glycinamide: step 1/2. Functionally, part of the phosphoribosylformylglycinamidine synthase complex involved in the purines biosynthetic pathway. Catalyzes the ATP-dependent conversion of formylglycinamide ribonucleotide (FGAR) and glutamine to yield formylglycinamidine ribonucleotide (FGAM) and glutamate. The FGAM synthase complex is composed of three subunits. PurQ produces an ammonia molecule by converting glutamine to glutamate. PurL transfers the ammonia molecule to FGAR to form FGAM in an ATP-dependent manner. PurS interacts with PurQ and PurL and is thought to assist in the transfer of the ammonia molecule from PurQ to PurL. The sequence is that of Phosphoribosylformylglycinamidine synthase subunit PurQ from Natronomonas pharaonis (strain ATCC 35678 / DSM 2160 / CIP 103997 / JCM 8858 / NBRC 14720 / NCIMB 2260 / Gabara) (Halobacterium pharaonis).